The primary structure comprises 888 residues: G-protein coupled receptor family C group 6 member A (888 aa).

The signal sequence occupies residues 1-15; it reads MALLMTCFVIVFAAS. Residues 16–568 lie on the Extracellular side of the membrane; sequence QPCQTPDDLV…KEMEYLDSLA (553 aa). N-linked (GlcNAc...) asparagine glycosylation is found at asparagine 251, asparagine 322, asparagine 532, and asparagine 544. Residues 569–589 traverse the membrane as a helical segment; the sequence is ILLLALSLLGILFVLAIGIIF. The Cytoplasmic segment spans residues 590–604; that stretch reads TRNLNTPVVKSSGEL. The helical transmembrane segment at 605–625 threads the bilayer; the sequence is MVRYVILFCHFLNFAGTGFFI. Topologically, residues 626–641 are extracellular; sequence REPQSFTCKTRQTLIC. The helical transmembrane segment at 642-662 threads the bilayer; the sequence is MSFTLCISYILMKSLKILLAF. The Cytoplasmic segment spans residues 663–676; sequence SSKLQNFLKCFYKP. A helical membrane pass occupies residues 677-697; that stretch reads IPIIFTCTGIVVVCTLLIFAA. Over 698–718 the chain is Extracellular; that stretch reads PAVGQNVSLPRVIIFECEEGS. A helical membrane pass occupies residues 719-739; the sequence is ILAFGSMLGYAAILAFMCFIC. At 740–754 the chain is on the cytoplasmic side; the sequence is AFKGRKFPENYNEAK. The helical transmembrane segment at 755 to 775 threads the bilayer; it reads FITFGMLIYFIAWITFIPIYT. At 776-779 the chain is on the extracellular side; it reads FGKY. The chain crosses the membrane as a helical span at residues 780–800; that stretch reads MLVVEIIIILISNYGICCMFF. Topologically, residues 801–888 are cytoplasmic; it reads PKCYVILSKQ…ALPPKRISSI (88 aa).

This sequence belongs to the G-protein coupled receptor 3 family. In terms of assembly, homodimer; disulfide-linked.

Its subcellular location is the cell membrane. In terms of biological role, receptor activated by multiple ligands, including osteocalcin (BGLAP), basic amino acids, and various cations. Activated by amino acids with a preference for basic amino acids such as L-Lys, L-Arg and L-ornithine but also by small and polar amino acids. The L-alpha amino acids respond is augmented by divalent cations Ca(2+) and Mg(2+). Seems to act through a G(q)/G(11) and G(i)-coupled pathway. Regulates testosterone production by acting as a ligand for uncarboxylated osteocalcin hormone: osteocalcin-binding at the surface of Leydig cells initiates a signaling response that promotes the expression of enzymes required for testosterone synthesis in a CREB-dependent manner. Mediates the non-genomic effects of androgens in multiple tissue. May coordinate nutritional and hormonal anabolic signals through the sensing of extracellular amino acids, osteocalcin, divalent ions and its responsiveness to anabolic steroids. The polypeptide is G-protein coupled receptor family C group 6 member A (GPRC6A) (Bos taurus (Bovine)).